A 338-amino-acid chain; its full sequence is DNA-directed RNA polymerase subunit alpha (338 aa).

The tract at residues 1–234 is alpha N-terminal domain (alpha-NTD); sequence MIHKNWAELI…DQLGIFVNFE (234 aa). Positions 250-338 are alpha C-terminal domain (alpha-CTD); the sequence is FNPLLLKKVD…DLAKKFEDSF (89 aa).

Belongs to the RNA polymerase alpha chain family. In terms of assembly, homodimer. The RNAP catalytic core consists of 2 alpha, 1 beta, 1 beta' and 1 omega subunit. When a sigma factor is associated with the core the holoenzyme is formed, which can initiate transcription.

It carries out the reaction RNA(n) + a ribonucleoside 5'-triphosphate = RNA(n+1) + diphosphate. Its function is as follows. DNA-dependent RNA polymerase catalyzes the transcription of DNA into RNA using the four ribonucleoside triphosphates as substrates. This is DNA-directed RNA polymerase subunit alpha from Roseobacter denitrificans (strain ATCC 33942 / OCh 114) (Erythrobacter sp. (strain OCh 114)).